Here is a 397-residue protein sequence, read N- to C-terminus: Succinyl-diaminopimelate desuccinylase (397 aa).

H73 serves as a coordination point for Zn(2+). D75 is an active-site residue. D106 is a Zn(2+) binding site. E140 functions as the Proton acceptor in the catalytic mechanism. Positions 141, 169, and 366 each coordinate Zn(2+).

The protein belongs to the peptidase M20A family. DapE subfamily. In terms of assembly, homodimer. Zn(2+) is required as a cofactor. The cofactor is Co(2+).

It carries out the reaction N-succinyl-(2S,6S)-2,6-diaminopimelate + H2O = (2S,6S)-2,6-diaminopimelate + succinate. It participates in amino-acid biosynthesis; L-lysine biosynthesis via DAP pathway; LL-2,6-diaminopimelate from (S)-tetrahydrodipicolinate (succinylase route): step 3/3. Its function is as follows. Catalyzes the hydrolysis of N-succinyl-L,L-diaminopimelic acid (SDAP), forming succinate and LL-2,6-diaminopimelate (DAP), an intermediate involved in the bacterial biosynthesis of lysine and meso-diaminopimelic acid, an essential component of bacterial cell walls. The protein is Succinyl-diaminopimelate desuccinylase of Rhizobium leguminosarum bv. trifolii (strain WSM2304).